The chain runs to 203 residues: A-type ATP synthase subunit E (203 aa).

It belongs to the V-ATPase E subunit family. As to quaternary structure, has multiple subunits with at least A(3), B(3), C, D, E, F, H, I and proteolipid K(x).

Its subcellular location is the cell membrane. Functionally, component of the A-type ATP synthase that produces ATP from ADP in the presence of a proton gradient across the membrane. The chain is A-type ATP synthase subunit E from Methanococcus maripaludis (strain DSM 14266 / JCM 13030 / NBRC 101832 / S2 / LL).